Here is a 291-residue protein sequence, read N- to C-terminus: Secretory carrier-associated membrane protein 5 (291 aa).

The span at 1–10 (MGGRYDRNTF) shows a compositional bias: basic and acidic residues. A disordered region spans residues 1–66 (MGGRYDRNTF…GSGAQDLKKK (66 aa)). Residues 1 to 126 (MGGRYDRNTF…EILVRLQRLQ (126 aa)) lie on the Cytoplasmic side of the membrane. S34 is modified (phosphoserine). Positions 58 to 94 (SGAQDLKKKEKELQAKEADLRRREQDLKRKQDAAARA) form a coiled coil. Helical transmembrane passes span 127–147 (YIAF…IIAV), 159–179 (IWLL…VLWY), 194–214 (FGWF…AAVA), and 242–262 (IFYF…IWVI). At 263-288 (QQVYMYFRGSGKADDMRRDAARGAMR) the chain is on the cytoplasmic side.

It belongs to the SCAMP family.

The protein resides in the cell membrane. It is found in the cytoplasmic vesicle. The protein localises to the secretory vesicle membrane. Its function is as follows. Probably involved in membrane trafficking. The polypeptide is Secretory carrier-associated membrane protein 5 (SCAMP5) (Arabidopsis thaliana (Mouse-ear cress)).